A 222-amino-acid polypeptide reads, in one-letter code: Peptide methionine sulfoxide reductase MsrA 1 (222 aa).

Cys57 is an active-site residue.

This sequence belongs to the MsrA Met sulfoxide reductase family.

It catalyses the reaction L-methionyl-[protein] + [thioredoxin]-disulfide + H2O = L-methionyl-(S)-S-oxide-[protein] + [thioredoxin]-dithiol. It carries out the reaction [thioredoxin]-disulfide + L-methionine + H2O = L-methionine (S)-S-oxide + [thioredoxin]-dithiol. Its function is as follows. Has an important function as a repair enzyme for proteins that have been inactivated by oxidation. Catalyzes the reversible oxidation-reduction of methionine sulfoxide in proteins to methionine. The chain is Peptide methionine sulfoxide reductase MsrA 1 (msrA1) from Synechocystis sp. (strain ATCC 27184 / PCC 6803 / Kazusa).